Here is a 286-residue protein sequence, read N- to C-terminus: Elongation factor Ts (286 aa).

Positions 82 to 85 (TDFV) are involved in Mg(2+) ion dislocation from EF-Tu.

This sequence belongs to the EF-Ts family.

The protein resides in the cytoplasm. Associates with the EF-Tu.GDP complex and induces the exchange of GDP to GTP. It remains bound to the aminoacyl-tRNA.EF-Tu.GTP complex up to the GTP hydrolysis stage on the ribosome. The chain is Elongation factor Ts from Hahella chejuensis (strain KCTC 2396).